Here is a 399-residue protein sequence, read N- to C-terminus: MAVTMLQDWCRWMGVNARRGLLILGIPEDCDDAEFQESLEAALRPMGHFTVLGKAFREEDNATAALVELDREVNYALVPREIPGTGGPWNVVFVPRCSGEEFLGLGRVFHFPEQEGQMVESVAGALGVGLRRVCWLRSIGQAVQPWVEAVRCQSLGVFSGRDQPAPGEESFEVWLDHTTEMLHVWQGVSERERRRRLLEGLRGTALQLVHALLAENPARTAQDCLAALAQVFGDNESQATIRVKCLTAQQQSGERLSAFVLRLEVLLQKAMEKEALARASADRVRLRQMLTRAHLTEPLDEALRKLRMAGRSPSFLEMLGLVRESEAWEASLARSVRAQTQEGAGARAGAQAVARASTKVEAVPGGPGREPEGLLQAGGQEAEELLQEGLKPVLEECDN.

The protein belongs to the PNMA family. In terms of tissue distribution, expressed in the brain.

This chain is Paraneoplastic antigen-like protein 6A, found in Homo sapiens (Human).